The primary structure comprises 101 residues: NAD(P)H-quinone oxidoreductase subunit 4L, chloroplastic (101 aa).

A run of 3 helical transmembrane segments spans residues 2–22 (ILEHVLVLSAYLFFIGLYGLI), 32–52 (MCLELILNAVNMNFVTFSDFF), and 61–81 (IFCIFVIAIAAAEAAIGLAIV).

It belongs to the complex I subunit 4L family. NDH is composed of at least 16 different subunits, 5 of which are encoded in the nucleus.

It is found in the plastid. It localises to the chloroplast thylakoid membrane. The catalysed reaction is a plastoquinone + NADH + (n+1) H(+)(in) = a plastoquinol + NAD(+) + n H(+)(out). It catalyses the reaction a plastoquinone + NADPH + (n+1) H(+)(in) = a plastoquinol + NADP(+) + n H(+)(out). Functionally, NDH shuttles electrons from NAD(P)H:plastoquinone, via FMN and iron-sulfur (Fe-S) centers, to quinones in the photosynthetic chain and possibly in a chloroplast respiratory chain. The immediate electron acceptor for the enzyme in this species is believed to be plastoquinone. Couples the redox reaction to proton translocation, and thus conserves the redox energy in a proton gradient. This Aethionema cordifolium (Lebanon stonecress) protein is NAD(P)H-quinone oxidoreductase subunit 4L, chloroplastic.